The primary structure comprises 323 residues: UPF0200/UPF0201 protein AF_1395 (323 aa).

The UPF0200 stretch occupies residues 1-185 (MVLEMKVIAF…EKIRQILLKL (185 aa)). Residue 12-19 (GYPLSGKS) participates in ATP binding. Residues 186 to 323 (AKNVEIEIRT…GRPVKEIDKL (138 aa)) form a UPF0201 region.

The protein in the N-terminal section; belongs to the UPF0200 family. This sequence in the C-terminal section; belongs to the UPF0201 family.

The sequence is that of UPF0200/UPF0201 protein AF_1395 from Archaeoglobus fulgidus (strain ATCC 49558 / DSM 4304 / JCM 9628 / NBRC 100126 / VC-16).